Consider the following 349-residue polypeptide: Short-wave-sensitive opsin 1 (349 aa).

The Extracellular segment spans residues 1–34 (MSKMPEEEEFYLFKNISSVGPWDGPQYHIAPVWA). Residue Asn-15 is glycosylated (N-linked (GlcNAc...) asparagine). Residues 35–59 (FQLQAAFMGIVFLAGLPLNSMVLVA) traverse the membrane as a helical segment. Over 60-71 (TVRYKKLRHPLN) the chain is Cytoplasmic. A helical membrane pass occupies residues 72–97 (YVLVNVSVGGFLLCIFSVLPVFVNSC). Residues 98 to 111 (NGYFVFGRHVCALE) are Extracellular-facing. The cysteines at positions 108 and 185 are disulfide-linked. A helical membrane pass occupies residues 112–131 (GFLGTVAGLVTGWSLAFLAF). The Cytoplasmic segment spans residues 132 to 150 (ERYIVICKPFGNFRFSSKH). The helical transmembrane segment at 151-174 (ALMVVLTTWTIGIGVSIPPFFGWS) threads the bilayer. Topologically, residues 175 to 200 (RYIAEGLQCSCGPDWYTVGTKYRSEY) are extracellular. The helical transmembrane segment at 201–228 (YTWFLFIFCFIVPLSLICFSYAQLLRAL) threads the bilayer. Over 229–250 (KAVAAQQQESATTQKAEREVSR) the chain is Cytoplasmic. Residues 251-274 (MVVVMVGSFCVCYVPYAALAMYMV) form a helical membrane-spanning segment. Residues 275-282 (NNRNHGLD) are Extracellular-facing. A helical transmembrane segment spans residues 283–307 (LRLVSIPAFFSKSSCIYNPIIYCFM). Lys-294 is modified (N6-(retinylidene)lysine). At 308–349 (NKQFRACIMEMVCGKAMTDESDISSSQKTEVSTVSSSQVGPN) the chain is on the cytoplasmic side.

This sequence belongs to the G-protein coupled receptor 1 family. Opsin subfamily. Phosphorylated on some or all of the serine and threonine residues present in the C-terminal region.

It is found in the cell membrane. The protein localises to the photoreceptor inner segment. It localises to the cell projection. Its subcellular location is the cilium. The protein resides in the photoreceptor outer segment. It is found in the cytoplasm. The protein localises to the perinuclear region. Functionally, visual pigments are the light-absorbing molecules that mediate vision. They consist of an apoprotein, opsin, covalently linked to cis-retinal. Required for the maintenance of cone outer segment organization in the ventral retina, but not essential for the maintenance of functioning cone photoreceptors. Involved in ensuring correct abundance and localization of retinal membrane proteins. May increase spectral sensitivity in dim light. The polypeptide is Short-wave-sensitive opsin 1 (OPN1SW) (Saimiri boliviensis boliviensis (Bolivian squirrel monkey)).